The chain runs to 327 residues: PDZ and LIM domain protein 1 (327 aa).

The residue at position 2 (Thr2) is an N-acetylthreonine. Residues 3 to 85 (TQQIVLQGPG…NMTLTVSRSE (83 aa)) form the PDZ domain. Residues Ser90 and Ser130 each carry the phosphoserine modification. Phosphotyrosine is present on Tyr142. Residues 161–186 (VESKTSASGEEANSRPSAQPHPSGGL) form a disordered region. The LIM zinc-binding domain occupies 256 to 315 (PICDKCGTGIVGVFVKLRDHHRHPECYVCTDCGINLKQKGHFFVGDQIYCEKHARERVTP). Cys258, Cys261, His278, Cys281, Cys284, Cys287, Cys305, and His308 together coordinate Zn(2+). Thr314 carries the phosphothreonine modification. Tyr319 is subject to Phosphotyrosine.

In terms of assembly, interacts with ACTN1. Interacts with ACTN2 and ACTN4. Interacts with PDLIM4. In terms of tissue distribution, expressed most abundantly in heart, lung and liver, moderately in spleen and skeletal muscle, and at extremely low levels (if at all) in testis and brain tissues.

The protein localises to the cytoplasm. The protein resides in the cytoskeleton. Its subcellular location is the myofibril. It is found in the sarcomere. It localises to the z line. Its function is as follows. Cytoskeletal protein that may act as an adapter that brings other proteins (like kinases) to the cytoskeleton. Involved in assembly, disassembly and directioning of stress fibers in fibroblasts. Required for the localization of ACTN1 and PALLD to stress fibers. Required for cell migration and in maintaining cell polarity of fibroblasts. This is PDZ and LIM domain protein 1 (Pdlim1) from Rattus norvegicus (Rat).